The following is a 180-amino-acid chain: Alpha-S2-casein-like A (180 aa).

A signal peptide spans 1-15; sequence MRFFVFTCLLAVALA. 2 positions are modified to phosphoserine: S23 and S25. The disordered stretch occupies residues 46–66; that stretch reads PTNQETPSVSSSEESVEVQTE.

The protein belongs to the alpha-casein family. Mammary gland specific. Secreted in milk.

Its subcellular location is the secreted. Important role in the capacity of milk to transport calcium phosphate. This Oryctolagus cuniculus (Rabbit) protein is Alpha-S2-casein-like A (CSN1S2A).